Here is a 157-residue protein sequence, read N- to C-terminus: 2-C-methyl-D-erythritol 2,4-cyclodiphosphate synthase (157 aa).

Asp8 and His10 together coordinate a divalent metal cation. 4-CDP-2-C-methyl-D-erythritol 2-phosphate is bound by residues 8–10 (DVH) and 34–35 (HS). Position 42 (His42) interacts with a divalent metal cation. 4-CDP-2-C-methyl-D-erythritol 2-phosphate is bound by residues 56 to 58 (DIG), 61 to 65 (FPDTD), 100 to 106 (AQAPKMA), 132 to 135 (TTTE), Phe139, and Arg142.

This sequence belongs to the IspF family. Homotrimer. A divalent metal cation is required as a cofactor.

The enzyme catalyses 4-CDP-2-C-methyl-D-erythritol 2-phosphate = 2-C-methyl-D-erythritol 2,4-cyclic diphosphate + CMP. It functions in the pathway isoprenoid biosynthesis; isopentenyl diphosphate biosynthesis via DXP pathway; isopentenyl diphosphate from 1-deoxy-D-xylulose 5-phosphate: step 4/6. Involved in the biosynthesis of isopentenyl diphosphate (IPP) and dimethylallyl diphosphate (DMAPP), two major building blocks of isoprenoid compounds. Catalyzes the conversion of 4-diphosphocytidyl-2-C-methyl-D-erythritol 2-phosphate (CDP-ME2P) to 2-C-methyl-D-erythritol 2,4-cyclodiphosphate (ME-CPP) with a corresponding release of cytidine 5-monophosphate (CMP). The sequence is that of 2-C-methyl-D-erythritol 2,4-cyclodiphosphate synthase from Pseudomonas paraeruginosa (strain DSM 24068 / PA7) (Pseudomonas aeruginosa (strain PA7)).